The following is a 467-amino-acid chain: RuvB-like helicase 2 (467 aa).

73-80 (GPPSTGKT) contacts ATP.

This sequence belongs to the RuvB family. May form heterododecamers with RVB1. Component of the SWR1 chromatin remodeling complex, the INO80 chromatin remodeling complex, and of the R2TP complex.

It is found in the nucleus. The enzyme catalyses ATP + H2O = ADP + phosphate + H(+). DNA helicase which participates in several chromatin remodeling complexes, including the SWR1 and the INO80 complexes. The SWR1 complex mediates the ATP-dependent exchange of histone H2A for the H2A variant HZT1 leading to transcriptional regulation of selected genes by chromatin remodeling. The INO80 complex remodels chromatin by shifting nucleosomes and is involved in DNA repair. Also involved in pre-rRNA processing. The sequence is that of RuvB-like helicase 2 (RVB2) from Kluyveromyces lactis (strain ATCC 8585 / CBS 2359 / DSM 70799 / NBRC 1267 / NRRL Y-1140 / WM37) (Yeast).